The chain runs to 138 residues: Cysteine desulfuration protein SufE (138 aa).

Cys-51 (cysteine persulfide intermediate) is an active-site residue.

This sequence belongs to the SufE family. In terms of assembly, homodimer. Interacts with SufS.

The protein resides in the cytoplasm. It functions in the pathway cofactor biosynthesis; iron-sulfur cluster biosynthesis. Participates in cysteine desulfuration mediated by SufS. Cysteine desulfuration mobilizes sulfur from L-cysteine to yield L-alanine and constitutes an essential step in sulfur metabolism for biosynthesis of a variety of sulfur-containing biomolecules. Functions as a sulfur acceptor for SufS, by mediating the direct transfer of the sulfur atom from the S-sulfanylcysteine of SufS, an intermediate product of cysteine desulfuration process. This Salmonella dublin (strain CT_02021853) protein is Cysteine desulfuration protein SufE.